The sequence spans 540 residues: 2-succinyl-5-enolpyruvyl-6-hydroxy-3-cyclohexene-1-carboxylate synthase (540 aa).

This sequence belongs to the TPP enzyme family. MenD subfamily. As to quaternary structure, homodimer. Mg(2+) is required as a cofactor. It depends on Mn(2+) as a cofactor. Thiamine diphosphate serves as cofactor.

It catalyses the reaction isochorismate + 2-oxoglutarate + H(+) = 5-enolpyruvoyl-6-hydroxy-2-succinyl-cyclohex-3-ene-1-carboxylate + CO2. Its pathway is quinol/quinone metabolism; 1,4-dihydroxy-2-naphthoate biosynthesis; 1,4-dihydroxy-2-naphthoate from chorismate: step 2/7. The protein operates within quinol/quinone metabolism; menaquinone biosynthesis. Catalyzes the thiamine diphosphate-dependent decarboxylation of 2-oxoglutarate and the subsequent addition of the resulting succinic semialdehyde-thiamine pyrophosphate anion to isochorismate to yield 2-succinyl-5-enolpyruvyl-6-hydroxy-3-cyclohexene-1-carboxylate (SEPHCHC). The sequence is that of 2-succinyl-5-enolpyruvyl-6-hydroxy-3-cyclohexene-1-carboxylate synthase from Mycobacteroides abscessus (strain ATCC 19977 / DSM 44196 / CCUG 20993 / CIP 104536 / JCM 13569 / NCTC 13031 / TMC 1543 / L948) (Mycobacterium abscessus).